Reading from the N-terminus, the 138-residue chain is Acidic phospholipase A2 PL1 (138 aa).

The signal sequence occupies residues Met-1–Gly-16. 7 cysteine pairs are disulfide-bonded: Cys-42–Cys-131, Cys-44–Cys-60, Cys-59–Cys-111, Cys-65–Cys-138, Cys-66–Cys-104, Cys-73–Cys-97, and Cys-91–Cys-102. Ca(2+) is bound by residues Tyr-43, Gly-45, and Gly-47. His-63 is a catalytic residue. Ca(2+) is bound at residue Asp-64. Residue Asp-105 is part of the active site.

Belongs to the phospholipase A2 family. Group II subfamily. D49 sub-subfamily. The cofactor is Ca(2+). As to expression, expressed by the venom gland.

It localises to the secreted. It catalyses the reaction a 1,2-diacyl-sn-glycero-3-phosphocholine + H2O = a 1-acyl-sn-glycero-3-phosphocholine + a fatty acid + H(+). In terms of biological role, PLA2 catalyzes the calcium-dependent hydrolysis of the 2-acyl groups in 3-sn-phosphoglycerides. This chain is Acidic phospholipase A2 PL1, found in Vipera renardi (Steppe viper).